Here is a 209-residue protein sequence, read N- to C-terminus: Uracil phosphoribosyltransferase (209 aa).

5-phospho-alpha-D-ribose 1-diphosphate-binding positions include R79, R104, and 131–139 (DPMLATGGS). Uracil contacts are provided by residues I194 and 199–201 (GDA). D200 is a binding site for 5-phospho-alpha-D-ribose 1-diphosphate.

This sequence belongs to the UPRTase family. Requires Mg(2+) as cofactor.

It catalyses the reaction UMP + diphosphate = 5-phospho-alpha-D-ribose 1-diphosphate + uracil. The protein operates within pyrimidine metabolism; UMP biosynthesis via salvage pathway; UMP from uracil: step 1/1. With respect to regulation, allosterically activated by GTP. Catalyzes the conversion of uracil and 5-phospho-alpha-D-ribose 1-diphosphate (PRPP) to UMP and diphosphate. The chain is Uracil phosphoribosyltransferase from Geobacillus sp. (strain WCH70).